A 283-amino-acid polypeptide reads, in one-letter code: Pantothenate synthetase (283 aa).

Residue 30–37 (MGNLHSGH) coordinates ATP. Histidine 37 serves as the catalytic Proton donor. Glutamine 61 provides a ligand contact to (R)-pantoate. Glutamine 61 is a binding site for beta-alanine. 149–152 (GQKD) serves as a coordination point for ATP. Position 155 (glutamine 155) interacts with (R)-pantoate. Residues valine 178 and 186 to 189 (LSSR) contribute to the ATP site.

The protein belongs to the pantothenate synthetase family. As to quaternary structure, homodimer.

The protein localises to the cytoplasm. It catalyses the reaction (R)-pantoate + beta-alanine + ATP = (R)-pantothenate + AMP + diphosphate + H(+). Its pathway is cofactor biosynthesis; (R)-pantothenate biosynthesis; (R)-pantothenate from (R)-pantoate and beta-alanine: step 1/1. In terms of biological role, catalyzes the condensation of pantoate with beta-alanine in an ATP-dependent reaction via a pantoyl-adenylate intermediate. In Pseudomonas fluorescens (strain SBW25), this protein is Pantothenate synthetase.